The sequence spans 113 residues: Tubulin alpha chain (113 aa).

A GTP-binding site is contributed by Glu52. Residue Glu52 participates in Mg(2+) binding.

The protein belongs to the tubulin family. As to quaternary structure, dimer of alpha and beta chains. A typical microtubule is a hollow water-filled tube with an outer diameter of 25 nm and an inner diameter of 15 nM. Alpha-beta heterodimers associate head-to-tail to form protofilaments running lengthwise along the microtubule wall with the beta-tubulin subunit facing the microtubule plus end conferring a structural polarity. Microtubules usually have 13 protofilaments but different protofilament numbers can be found in some organisms and specialized cells. Mg(2+) serves as cofactor.

It is found in the cytoplasm. The protein localises to the cytoskeleton. It carries out the reaction GTP + H2O = GDP + phosphate + H(+). Its function is as follows. Tubulin is the major constituent of microtubules, a cylinder consisting of laterally associated linear protofilaments composed of alpha- and beta-tubulin heterodimers. Microtubules grow by the addition of GTP-tubulin dimers to the microtubule end, where a stabilizing cap forms. Below the cap, tubulin dimers are in GDP-bound state, owing to GTPase activity of alpha-tubulin. This Picea abies (Norway spruce) protein is Tubulin alpha chain (TUBA).